A 511-amino-acid polypeptide reads, in one-letter code: Probable cytosol aminopeptidase (511 aa).

The Mn(2+) site is built by Lys255 and Asp260. The active site involves Lys267. Mn(2+) is bound by residues Asp278, Asp337, and Glu339. Arg341 is a catalytic residue. The disordered stretch occupies residues 485–511 (GAAQAVSPKKAARKEPGAAARKARSAQ).

This sequence belongs to the peptidase M17 family. It depends on Mn(2+) as a cofactor.

The protein localises to the cytoplasm. The catalysed reaction is Release of an N-terminal amino acid, Xaa-|-Yaa-, in which Xaa is preferably Leu, but may be other amino acids including Pro although not Arg or Lys, and Yaa may be Pro. Amino acid amides and methyl esters are also readily hydrolyzed, but rates on arylamides are exceedingly low.. It catalyses the reaction Release of an N-terminal amino acid, preferentially leucine, but not glutamic or aspartic acids.. In terms of biological role, presumably involved in the processing and regular turnover of intracellular proteins. Catalyzes the removal of unsubstituted N-terminal amino acids from various peptides. The polypeptide is Probable cytosol aminopeptidase (Variovorax paradoxus (strain S110)).